We begin with the raw amino-acid sequence, 444 residues long: Homogentisate 1,2-dioxygenase (444 aa).

H298 functions as the Proton acceptor in the catalytic mechanism. 2 residues coordinate Fe cation: H341 and E347. The homogentisate site is built by Y356 and H377. H377 is a binding site for Fe cation.

Belongs to the homogentisate dioxygenase family. As to quaternary structure, hexamer; dimer of trimers. Requires Fe cation as cofactor.

It catalyses the reaction homogentisate + O2 = 4-maleylacetoacetate + H(+). Its pathway is amino-acid degradation; L-phenylalanine degradation; acetoacetate and fumarate from L-phenylalanine: step 4/6. In terms of biological role, involved in the catabolism of homogentisate (2,5-dihydroxyphenylacetate or 2,5-OH-PhAc), a central intermediate in the degradation of phenylalanine and tyrosine. Catalyzes the oxidative ring cleavage of the aromatic ring of homogentisate to yield maleylacetoacetate. This is Homogentisate 1,2-dioxygenase from Burkholderia orbicola (strain AU 1054).